Consider the following 58-residue polypeptide: Pepsin-1 (58 aa).

A propeptide spans 1 to 41 (activation peptide); that stretch reads LLQVPLEKGQSAREYLQEQGLWEQYRLKYPYNPMAKFDPSF.

This sequence belongs to the peptidase A1 family.

The chain is Pepsin-1 from Thunnus orientalis (North Pacific bluefin tuna).